The sequence spans 229 residues: Cytochrome c oxidase subunit 2 (229 aa).

The Mitochondrial intermembrane segment spans residues 1–26 (MSTWANLGLQDSASPLMEQLIFFHDH). The helical transmembrane segment at 27-48 (ALLILVMITILVGYLMFMLFFN) threads the bilayer. The Mitochondrial matrix portion of the chain corresponds to 49–62 (SYINRFLLHGQLIE). Residues 63–82 (MIWTILPAIILLFIAMPSLR) form a helical membrane-spanning segment. Topologically, residues 83 to 229 (LLYLLDEINE…IKWIASKVNS (147 aa)) are mitochondrial intermembrane. Cu cation-binding residues include His-161, Cys-196, Glu-198, Cys-200, His-204, and Met-207. Mg(2+) is bound at residue Glu-198.

This sequence belongs to the cytochrome c oxidase subunit 2 family. Component of the cytochrome c oxidase (complex IV, CIV), a multisubunit enzyme composed of a catalytic core of 3 subunits and several supernumerary subunits. The complex exists as a monomer or a dimer and forms supercomplexes (SCs) in the inner mitochondrial membrane with ubiquinol-cytochrome c oxidoreductase (cytochrome b-c1 complex, complex III, CIII). The cofactor is Cu cation.

It is found in the mitochondrion inner membrane. The enzyme catalyses 4 Fe(II)-[cytochrome c] + O2 + 8 H(+)(in) = 4 Fe(III)-[cytochrome c] + 2 H2O + 4 H(+)(out). Its function is as follows. Component of the cytochrome c oxidase, the last enzyme in the mitochondrial electron transport chain which drives oxidative phosphorylation. The respiratory chain contains 3 multisubunit complexes succinate dehydrogenase (complex II, CII), ubiquinol-cytochrome c oxidoreductase (cytochrome b-c1 complex, complex III, CIII) and cytochrome c oxidase (complex IV, CIV), that cooperate to transfer electrons derived from NADH and succinate to molecular oxygen, creating an electrochemical gradient over the inner membrane that drives transmembrane transport and the ATP synthase. Cytochrome c oxidase is the component of the respiratory chain that catalyzes the reduction of oxygen to water. Electrons originating from reduced cytochrome c in the intermembrane space (IMS) are transferred via the dinuclear copper A center (CU(A)) of subunit 2 and heme A of subunit 1 to the active site in subunit 1, a binuclear center (BNC) formed by heme A3 and copper B (CU(B)). The BNC reduces molecular oxygen to 2 water molecules using 4 electrons from cytochrome c in the IMS and 4 protons from the mitochondrial matrix. This Drosophila bifasciata (Fruit fly) protein is Cytochrome c oxidase subunit 2 (mt:CoII).